A 388-amino-acid polypeptide reads, in one-letter code: S-adenosylmethionine synthase (388 aa).

His16 serves as a coordination point for ATP. Asp18 lines the Mg(2+) pocket. Glu44 serves as a coordination point for K(+). Positions 57 and 100 each coordinate L-methionine. Positions 100–110 are flexible loop; that stretch reads QSPEIAQGVDR. Residues 165-167, 231-232, Asp240, 246-247, Ala263, and Lys267 each bind ATP; these read DAK, KF, and RK. Asp240 contributes to the L-methionine binding site. Lys271 is an L-methionine binding site.

The protein belongs to the AdoMet synthase family. As to quaternary structure, homotetramer; dimer of dimers. Requires Mg(2+) as cofactor. It depends on K(+) as a cofactor.

It localises to the cytoplasm. It catalyses the reaction L-methionine + ATP + H2O = S-adenosyl-L-methionine + phosphate + diphosphate. It participates in amino-acid biosynthesis; S-adenosyl-L-methionine biosynthesis; S-adenosyl-L-methionine from L-methionine: step 1/1. Functionally, catalyzes the formation of S-adenosylmethionine (AdoMet) from methionine and ATP. The overall synthetic reaction is composed of two sequential steps, AdoMet formation and the subsequent tripolyphosphate hydrolysis which occurs prior to release of AdoMet from the enzyme. This is S-adenosylmethionine synthase from Psychrobacter sp. (strain PRwf-1).